Consider the following 184-residue polypeptide: Peptide deformylase 2 (184 aa).

Residues C110 and H153 each coordinate Fe cation. Residue E154 is part of the active site. H157 provides a ligand contact to Fe cation.

Belongs to the polypeptide deformylase family. The cofactor is Fe(2+).

It carries out the reaction N-terminal N-formyl-L-methionyl-[peptide] + H2O = N-terminal L-methionyl-[peptide] + formate. In terms of biological role, removes the formyl group from the N-terminal Met of newly synthesized proteins. Requires at least a dipeptide for an efficient rate of reaction. N-terminal L-methionine is a prerequisite for activity but the enzyme has broad specificity at other positions. The protein is Peptide deformylase 2 (defB) of Bacillus subtilis (strain 168).